Reading from the N-terminus, the 86-residue chain is Co-chaperonin GroES (86 aa).

The protein belongs to the GroES chaperonin family. Heptamer of 7 subunits arranged in a ring. Interacts with the chaperonin GroEL.

The protein resides in the cytoplasm. Its function is as follows. Together with the chaperonin GroEL, plays an essential role in assisting protein folding. The GroEL-GroES system forms a nano-cage that allows encapsulation of the non-native substrate proteins and provides a physical environment optimized to promote and accelerate protein folding. GroES binds to the apical surface of the GroEL ring, thereby capping the opening of the GroEL channel. This Campylobacter concisus (strain 13826) protein is Co-chaperonin GroES.